The sequence spans 428 residues: Probable pectin lyase F (428 aa).

Residues 1-20 (MVLLHPLLTAAALLGASARA) form the signal peptide. Cys-83 and Cys-107 are oxidised to a cystine. Residue Arg-257 is part of the active site. Asn-276 carries N-linked (GlcNAc...) asparagine glycosylation. Cys-324 and Cys-332 are disulfide-bonded. 2 disordered regions span residues 337–367 (LTSS…MTTD) and 383–428 (GSGG…HHHY). Residues 389 to 417 (AASSSASITPSPTSSAIPSSSATPSSSAY) are compositionally biased toward low complexity. Residues 418–428 (ARRHYARHHHY) are compositionally biased toward basic residues.

The protein belongs to the polysaccharide lyase 1 family.

The protein resides in the secreted. It carries out the reaction Eliminative cleavage of (1-&gt;4)-alpha-D-galacturonan methyl ester to give oligosaccharides with 4-deoxy-6-O-methyl-alpha-D-galact-4-enuronosyl groups at their non-reducing ends.. Its function is as follows. Pectinolytic enzymes consist of four classes of enzymes: pectin lyase, polygalacturonase, pectin methylesterase and rhamnogalacturonase. Among pectinolytic enzymes, pectin lyase is the most important in depolymerization of pectin, since it cleaves internal glycosidic bonds of highly methylated pectins. The polypeptide is Probable pectin lyase F (pelF) (Aspergillus flavus (strain ATCC 200026 / FGSC A1120 / IAM 13836 / NRRL 3357 / JCM 12722 / SRRC 167)).